Reading from the N-terminus, the 485-residue chain is NADH-quinone oxidoreductase subunit N (485 aa).

Transmembrane regions (helical) follow at residues 8-28, 35-55, 71-91, 105-125, 127-147, 159-179, 203-223, 235-255, 271-291, 297-317, 326-346, 373-393, 408-430, and 455-475; these read LIALLPLLIVGLTVVVVMLSI, FLNATLSVIGLNAALVSLWFV, GFAMLYTGLVQVASLATCTFA, FYLLVLIASLGGILLANANHL, ALFLGIELISLPLFGLIGYAF, YTILSAAASSFLLFGMALVYA, LLAGFGLMIVGLGFKLSLVPF, PAPVSTFLATASKIAIFGVVM, VVLGIIAFASIIFGNLMALSQ, LLGYSSISHLGYLLVALIALQ, VGVYLAGYLFSSLGAFGVVSL, AAVMTVMMLSLAGIPMTLGFI, WWLVAAVVVGSAIGLYYYLRVAV, and IVVLISALLVLVLGVWPQPLI.

This sequence belongs to the complex I subunit 2 family. As to quaternary structure, NDH-1 is composed of 13 different subunits. Subunits NuoA, H, J, K, L, M, N constitute the membrane sector of the complex.

Its subcellular location is the cell inner membrane. The enzyme catalyses a quinone + NADH + 5 H(+)(in) = a quinol + NAD(+) + 4 H(+)(out). Functionally, NDH-1 shuttles electrons from NADH, via FMN and iron-sulfur (Fe-S) centers, to quinones in the respiratory chain. The immediate electron acceptor for the enzyme in this species is believed to be ubiquinone. Couples the redox reaction to proton translocation (for every two electrons transferred, four hydrogen ions are translocated across the cytoplasmic membrane), and thus conserves the redox energy in a proton gradient. The sequence is that of NADH-quinone oxidoreductase subunit N from Salmonella gallinarum (strain 287/91 / NCTC 13346).